Here is a 489-residue protein sequence, read N- to C-terminus: Mitochondrial distribution and morphology protein 12 (489 aa).

One can recognise an SMP-LTD domain in the interval 1–489 (MSIDLNWEAA…VFPSFWTFLV (489 aa)). The segment covering 72-82 (ESDSEDEDEGH) has biased composition (acidic residues). Disordered stretches follow at residues 72-97 (ESDSEDEDEGHEDIQSDASSDRAAAD), 201-313 (WPDA…MRER), and 394-432 (DINHQQRQQQQQQHPYPTTNTSESINNNNPETHPPQPRR). Polar residues predominate over residues 231-249 (LDTGSPSRPSTANTNPTQL). Low complexity-rich tracts occupy residues 250–265 (SHGQSAAGSSSNNTSN) and 398–424 (QQRQQQQQQHPYPTTNTSESINNNNPE).

This sequence belongs to the MDM12 family. Component of the ER-mitochondria encounter structure (ERMES) or MDM complex, composed of MMM1, MDM10, mdm12 and MDM34. An MMM1 homodimer associates with one molecule of mdm12 on each side in a pairwise head-to-tail manner, and the SMP-LTD domains of MMM1 and mdm12 generate a continuous hydrophobic tunnel for phospholipid trafficking.

It is found in the mitochondrion outer membrane. It localises to the endoplasmic reticulum membrane. Its function is as follows. Component of the ERMES/MDM complex, which serves as a molecular tether to connect the endoplasmic reticulum (ER) and mitochondria. Components of this complex are involved in the control of mitochondrial shape and protein biogenesis, and function in nonvesicular lipid trafficking between the ER and mitochondria. mdm12 is required for the interaction of the ER-resident membrane protein MMM1 and the outer mitochondrial membrane-resident beta-barrel protein MDM10. The mdm12-MMM1 subcomplex functions in the major beta-barrel assembly pathway that is responsible for biogenesis of all mitochondrial outer membrane beta-barrel proteins, and acts in a late step after the SAM complex. The MDM10-mdm12-MMM1 subcomplex further acts in the TOM40-specific pathway after the action of the mdm12-MMM1 complex. Essential for establishing and maintaining the structure of mitochondria and maintenance of mtDNA nucleoids. This is Mitochondrial distribution and morphology protein 12 from Talaromyces marneffei (strain ATCC 18224 / CBS 334.59 / QM 7333) (Penicillium marneffei).